A 184-amino-acid chain; its full sequence is ATP synthase subunit b, chloroplastic (184 aa).

The helical transmembrane segment at 27–49 (LATNLINLSVVLGVLIFFGKGVL) threads the bilayer.

It belongs to the ATPase B chain family. F-type ATPases have 2 components, F(1) - the catalytic core - and F(0) - the membrane proton channel. F(1) has five subunits: alpha(3), beta(3), gamma(1), delta(1), epsilon(1). F(0) has four main subunits: a(1), b(1), b'(1) and c(10-14). The alpha and beta chains form an alternating ring which encloses part of the gamma chain. F(1) is attached to F(0) by a central stalk formed by the gamma and epsilon chains, while a peripheral stalk is formed by the delta, b and b' chains.

The protein localises to the plastid. Its subcellular location is the chloroplast thylakoid membrane. Its function is as follows. F(1)F(0) ATP synthase produces ATP from ADP in the presence of a proton or sodium gradient. F-type ATPases consist of two structural domains, F(1) containing the extramembraneous catalytic core and F(0) containing the membrane proton channel, linked together by a central stalk and a peripheral stalk. During catalysis, ATP synthesis in the catalytic domain of F(1) is coupled via a rotary mechanism of the central stalk subunits to proton translocation. Functionally, component of the F(0) channel, it forms part of the peripheral stalk, linking F(1) to F(0). This is ATP synthase subunit b, chloroplastic from Spinacia oleracea (Spinach).